Consider the following 525-residue polypeptide: Protein nucleotidyltransferase YdiU (525 aa).

ATP contacts are provided by Gly107, Gly109, Arg110, Lys129, Asp141, Gly142, Arg192, and Arg199. Residue Asp268 is the Proton acceptor of the active site. Mg(2+) is bound by residues Asn269 and Asp278. Asp278 is an ATP binding site.

Belongs to the SELO family. Mg(2+) serves as cofactor. It depends on Mn(2+) as a cofactor.

It carries out the reaction L-seryl-[protein] + ATP = 3-O-(5'-adenylyl)-L-seryl-[protein] + diphosphate. It catalyses the reaction L-threonyl-[protein] + ATP = 3-O-(5'-adenylyl)-L-threonyl-[protein] + diphosphate. The catalysed reaction is L-tyrosyl-[protein] + ATP = O-(5'-adenylyl)-L-tyrosyl-[protein] + diphosphate. The enzyme catalyses L-histidyl-[protein] + UTP = N(tele)-(5'-uridylyl)-L-histidyl-[protein] + diphosphate. It carries out the reaction L-seryl-[protein] + UTP = O-(5'-uridylyl)-L-seryl-[protein] + diphosphate. It catalyses the reaction L-tyrosyl-[protein] + UTP = O-(5'-uridylyl)-L-tyrosyl-[protein] + diphosphate. Nucleotidyltransferase involved in the post-translational modification of proteins. It can catalyze the addition of adenosine monophosphate (AMP) or uridine monophosphate (UMP) to a protein, resulting in modifications known as AMPylation and UMPylation. The polypeptide is Protein nucleotidyltransferase YdiU (Ralstonia nicotianae (strain ATCC BAA-1114 / GMI1000) (Ralstonia solanacearum)).